Here is a 525-residue protein sequence, read N- to C-terminus: Signal recognition particle protein (525 aa).

GTP contacts are provided by residues 107-114 (GLQGSGKT), 196-200 (DTAGR), and 254-257 (TKLD). The disordered stretch occupies residues 437-525 (GMGIPGIGRK…LSKLKFPGKK (89 aa)). Basic residues predominate over residues 447–467 (SATRKSKGAKGKSGKKSKKGT). Residues 480-497 (GVPGMPGLAGLPGGLPDL) are compositionally biased toward low complexity.

This sequence belongs to the GTP-binding SRP family. SRP54 subfamily. In terms of assembly, part of the signal recognition particle protein translocation system, which is composed of SRP and FtsY.

Its subcellular location is the cytoplasm. The enzyme catalyses GTP + H2O = GDP + phosphate + H(+). Involved in targeting and insertion of nascent membrane proteins into the cytoplasmic membrane. Binds to the hydrophobic signal sequence of the ribosome-nascent chain (RNC) as it emerges from the ribosomes. The SRP-RNC complex is then targeted to the cytoplasmic membrane where it interacts with the SRP receptor FtsY. The sequence is that of Signal recognition particle protein from Mycobacterium bovis (strain ATCC BAA-935 / AF2122/97).